A 372-amino-acid chain; its full sequence is Mannan endo-1,4-beta-mannosidase 8 (372 aa).

2 residues coordinate substrate: W57 and N172. E173 functions as the Proton donor in the catalytic mechanism. Substrate is bound at residue Y253. E293 serves as the catalytic Nucleophile. Position 335 (W335) interacts with substrate.

The protein belongs to the glycosyl hydrolase 5 (cellulase A) family. As to expression, expressed in stems and leaves and seeds.

It carries out the reaction Random hydrolysis of (1-&gt;4)-beta-D-mannosidic linkages in mannans, galactomannans and glucomannans.. The chain is Mannan endo-1,4-beta-mannosidase 8 (MAN8) from Oryza sativa subsp. japonica (Rice).